We begin with the raw amino-acid sequence, 484 residues long: ATP synthase subunit beta (484 aa).

Position 169-176 (169-176) interacts with ATP; sequence GGAGVGKT.

Belongs to the ATPase alpha/beta chains family. In terms of assembly, F-type ATPases have 2 components, CF(1) - the catalytic core - and CF(0) - the membrane proton channel. CF(1) has five subunits: alpha(3), beta(3), gamma(1), delta(1), epsilon(1). CF(0) has three main subunits: a(1), b(2) and c(9-12). The alpha and beta chains form an alternating ring which encloses part of the gamma chain. CF(1) is attached to CF(0) by a central stalk formed by the gamma and epsilon chains, while a peripheral stalk is formed by the delta and b chains.

Its subcellular location is the cell membrane. The catalysed reaction is ATP + H2O + 4 H(+)(in) = ADP + phosphate + 5 H(+)(out). Its function is as follows. Produces ATP from ADP in the presence of a proton gradient across the membrane. The catalytic sites are hosted primarily by the beta subunits. This is ATP synthase subunit beta from Nocardioides sp. (strain ATCC BAA-499 / JS614).